The following is a 156-amino-acid chain: 6,7-dimethyl-8-ribityllumazine synthase (156 aa).

5-amino-6-(D-ribitylamino)uracil contacts are provided by residues F23, 57-59 (AFE), and 81-83 (AVI). Residue 86–87 (ST) participates in (2S)-2-hydroxy-3-oxobutyl phosphate binding. The active-site Proton donor is H89. 5-amino-6-(D-ribitylamino)uracil is bound at residue F114. R128 lines the (2S)-2-hydroxy-3-oxobutyl phosphate pocket.

The protein belongs to the DMRL synthase family.

The enzyme catalyses (2S)-2-hydroxy-3-oxobutyl phosphate + 5-amino-6-(D-ribitylamino)uracil = 6,7-dimethyl-8-(1-D-ribityl)lumazine + phosphate + 2 H2O + H(+). The protein operates within cofactor biosynthesis; riboflavin biosynthesis; riboflavin from 2-hydroxy-3-oxobutyl phosphate and 5-amino-6-(D-ribitylamino)uracil: step 1/2. In terms of biological role, catalyzes the formation of 6,7-dimethyl-8-ribityllumazine by condensation of 5-amino-6-(D-ribitylamino)uracil with 3,4-dihydroxy-2-butanone 4-phosphate. This is the penultimate step in the biosynthesis of riboflavin. In Campylobacter curvus (strain 525.92), this protein is 6,7-dimethyl-8-ribityllumazine synthase.